The sequence spans 239 residues: LexA repressor (239 aa).

The interval 1–40 is disordered; the sequence is MTEAATGPEGADPSRAARSLPGRPPGIRADSSGLTDRQRR. Residues 58 to 78 constitute a DNA-binding region (H-T-H motif); the sequence is MREIGQAVGLSSTSSVAHQLM. A compositionally biased stretch (basic and acidic residues) spans 89-100; that stretch reads DPHRPRAYEVRG. The disordered stretch occupies residues 89 to 116; the sequence is DPHRPRAYEVRGSDQPSAQPADTSGKPA. Residues Ser-163 and Lys-200 each act as for autocatalytic cleavage activity in the active site.

This sequence belongs to the peptidase S24 family. As to quaternary structure, homodimer.

The enzyme catalyses Hydrolysis of Ala-|-Gly bond in repressor LexA.. Represses a number of genes involved in the response to DNA damage (SOS response), including recA and lexA. In the presence of single-stranded DNA, RecA interacts with LexA causing an autocatalytic cleavage which disrupts the DNA-binding part of LexA, leading to derepression of the SOS regulon and eventually DNA repair. The protein is LexA repressor of Streptomyces clavuligerus.